We begin with the raw amino-acid sequence, 464 residues long: MRFLSKRILKPVLSVIILISIAVTVVLYFLTANENYLQAVKDSAKSQYASLRESYKSITGKTESADELPDHDAEVLDSIMDRLHEPLYEKDTFDPNEVLAENKQLYEEFLLQEISEPKVDNLVRSGDPLAGKAKGTILSLVRNSDLEDIISSIQQLEEEYNKNFGYPYTFLNDEEFTDEFKDGIKSILPKDRVVEFGTIGPDNWNMPDSIDRERYDQEMDKMSKENIQYAEVESYHNMCRFYSKEFYHHPLLSKYKYVWRLEPNVNFYCKINYDVFQFMNKNDKIYGFVLNLYDSPQTIETLWTSTMDFVEEHPNYLNVNGAFAWLKDNSQNPKNYDYTQGYSTCHFWTNFEIVDLDFLRSEPYEKYMQYLEEKGGFYYERWGDAPVRSLALALFADKSSIHWFRDIGYHHTPYTNCPTCPADSDRCNGNCVPGKFTPWSDLDNQNCQATWIRHSMSEEELEMY.

At 1 to 11 (MRFLSKRILKP) the chain is on the cytoplasmic side. Residues 12 to 32 (VLSVIILISIAVTVVLYFLTA) traverse the membrane as a helical; Signal-anchor for type II membrane protein segment. Residues 33–130 (NENYLQAVKD…NLVRSGDPLA (98 aa)) form a stem region region. The Lumenal segment spans residues 33-464 (NENYLQAVKD…SMSEEELEMY (432 aa)). Residues 131–464 (GKAKGTILSL…SMSEEELEMY (334 aa)) form a catalytic region. Catalysis depends on glutamate 352, which acts as the Nucleophile.

It belongs to the glycosyltransferase 15 family.

The protein localises to the membrane. Its function is as follows. Possible glycosyltransferase that transfers an alpha-D-mannosyl residue from GDP-mannose into lipid-linked oligosaccharide, forming an alpha-(1-&gt;2)-D-mannosyl-D-mannose linkage. This is Probable mannosyltransferase KTR4 (KTR4) from Saccharomyces cerevisiae (strain ATCC 204508 / S288c) (Baker's yeast).